Reading from the N-terminus, the 66-residue chain is Large ribosomal subunit protein bL33c (66 aa).

This sequence belongs to the bacterial ribosomal protein bL33 family.

The protein localises to the plastid. It localises to the chloroplast. The polypeptide is Large ribosomal subunit protein bL33c (Vitis vinifera (Grape)).